Consider the following 489-residue polypeptide: Glutamyl-tRNA(Gln) amidotransferase subunit A (489 aa).

Active-site charge relay system residues include Lys-80 and Ser-160. The active-site Acyl-ester intermediate is Ser-184.

This sequence belongs to the amidase family. GatA subfamily. As to quaternary structure, heterotrimer of A, B and C subunits.

The enzyme catalyses L-glutamyl-tRNA(Gln) + L-glutamine + ATP + H2O = L-glutaminyl-tRNA(Gln) + L-glutamate + ADP + phosphate + H(+). Its function is as follows. Allows the formation of correctly charged Gln-tRNA(Gln) through the transamidation of misacylated Glu-tRNA(Gln) in organisms which lack glutaminyl-tRNA synthetase. The reaction takes place in the presence of glutamine and ATP through an activated gamma-phospho-Glu-tRNA(Gln). The sequence is that of Glutamyl-tRNA(Gln) amidotransferase subunit A from Wolbachia sp. subsp. Brugia malayi (strain TRS).